Reading from the N-terminus, the 182-residue chain is Fatty-acid and retinol-binding protein 1 (182 aa).

A signal peptide spans 1–17; it reads MIRATIILAAVAALAFS. The stretch at 86-106 forms a coiled coil; it reads EKASKLHQIVKDKVNALNDEA.

This sequence belongs to the fatty-acid and retinol-binding protein (FARBP) family.

Its subcellular location is the secreted. Functionally, probably binds lipids. This is Fatty-acid and retinol-binding protein 1 (far-1) from Caenorhabditis elegans.